Here is a 438-residue protein sequence, read N- to C-terminus: Trigger factor (438 aa).

Positions 163–248 (GDIITIDYEG…VKEIKRKELA (86 aa)) constitute a PPIase FKBP-type domain.

This sequence belongs to the FKBP-type PPIase family. Tig subfamily.

The protein localises to the cytoplasm. The enzyme catalyses [protein]-peptidylproline (omega=180) = [protein]-peptidylproline (omega=0). Its function is as follows. Involved in protein export. Acts as a chaperone by maintaining the newly synthesized protein in an open conformation. Functions as a peptidyl-prolyl cis-trans isomerase. This Desulforudis audaxviator (strain MP104C) protein is Trigger factor.